The sequence spans 357 residues: Ribosomal RNA large subunit methyltransferase M (357 aa).

S-adenosyl-L-methionine contacts are provided by residues Ser183, 216–219 (APGG), Asp235, Asp255, and Asp271. The Proton acceptor role is filled by Lys300.

Belongs to the class I-like SAM-binding methyltransferase superfamily. RNA methyltransferase RlmE family. RlmM subfamily. In terms of assembly, monomer.

It localises to the cytoplasm. The enzyme catalyses cytidine(2498) in 23S rRNA + S-adenosyl-L-methionine = 2'-O-methylcytidine(2498) in 23S rRNA + S-adenosyl-L-homocysteine + H(+). Catalyzes the 2'-O-methylation at nucleotide C2498 in 23S rRNA. This is Ribosomal RNA large subunit methyltransferase M from Pseudomonas fluorescens (strain Pf0-1).